We begin with the raw amino-acid sequence, 604 residues long: Sulfite reductase [NADPH] flavoprotein alpha-component (604 aa).

Positions 66-204 constitute a Flavodoxin-like domain; sequence VTVLSASQTG…SANAWTDNIA (139 aa). FMN is bound by residues 72-77, 119-122, and 155-164; these read SQTGNA, STQG, and LGDSSYPNFC. The region spanning 239 to 453 is the FAD-binding FR-type domain; sequence AAPFPAALLA…VERNDGFRLP (215 aa). FAD-binding positions include Thr327, Gln361, 391-394, 409-411, and 424-427; these read RLYS, TVG, and GGAS. Residues 524–525, 530–534, and Asp566 contribute to the NADP(+) site; these read SR and KIYVQ. Tyr604 contacts FAD.

Belongs to the NADPH-dependent sulphite reductase flavoprotein subunit CysJ family. This sequence in the N-terminal section; belongs to the flavodoxin family. It in the C-terminal section; belongs to the flavoprotein pyridine nucleotide cytochrome reductase family. As to quaternary structure, alpha(8)-beta(8). The alpha component is a flavoprotein, the beta component is a hemoprotein. It depends on FAD as a cofactor. FMN is required as a cofactor.

The enzyme catalyses hydrogen sulfide + 3 NADP(+) + 3 H2O = sulfite + 3 NADPH + 4 H(+). It participates in sulfur metabolism; hydrogen sulfide biosynthesis; hydrogen sulfide from sulfite (NADPH route): step 1/1. Functionally, component of the sulfite reductase complex that catalyzes the 6-electron reduction of sulfite to sulfide. This is one of several activities required for the biosynthesis of L-cysteine from sulfate. The flavoprotein component catalyzes the electron flow from NADPH -&gt; FAD -&gt; FMN to the hemoprotein component. This is Sulfite reductase [NADPH] flavoprotein alpha-component from Neisseria meningitidis serogroup B (strain ATCC BAA-335 / MC58).